The sequence spans 432 residues: Alpha-galactosidase (432 aa).

2–68 (KKITFIGAGS…PSVAINSYDD (67 aa)) provides a ligand contact to NAD(+). Residue asparagine 148 coordinates substrate. Cysteine 169 serves as a coordination point for Mn(2+). Histidine 170 functions as the Proton donor in the catalytic mechanism. Histidine 199 is a binding site for Mn(2+).

Belongs to the glycosyl hydrolase 4 family. Homodimer. Mn(2+) serves as cofactor. NAD(+) is required as a cofactor.

Its subcellular location is the cytoplasm. The catalysed reaction is Hydrolysis of terminal, non-reducing alpha-D-galactose residues in alpha-D-galactosides, including galactose oligosaccharides, galactomannans and galactolipids.. Functionally, catalyzes the hydrolysis of melibiose and alpha-galactosides of the raffinose family of oligosaccharides (RFOs) such as raffinose and stachyose. Cannot act on polymeric substrates such as locust bean gum. The polypeptide is Alpha-galactosidase (Bacillus subtilis (strain 168)).